The chain runs to 276 residues: Orotidine 5'-phosphate decarboxylase (276 aa).

Substrate contacts are provided by residues Asp40, 62–64 (KTH), 93–102 (DRKFIDIGNT), Tyr228, and Arg246. Lys95 acts as the Proton donor in catalysis.

Belongs to the OMP decarboxylase family.

The catalysed reaction is orotidine 5'-phosphate + H(+) = UMP + CO2. The protein operates within pyrimidine metabolism; UMP biosynthesis via de novo pathway; UMP from orotate: step 2/2. The polypeptide is Orotidine 5'-phosphate decarboxylase (pyrG) (Penicillium nalgiovense).